A 116-amino-acid polypeptide reads, in one-letter code: Large ribosomal subunit protein bL17 (116 aa).

It belongs to the bacterial ribosomal protein bL17 family. As to quaternary structure, part of the 50S ribosomal subunit. Contacts protein L32.

This chain is Large ribosomal subunit protein bL17, found in Helicobacter pylori (strain G27).